We begin with the raw amino-acid sequence, 171 residues long: MEPKNSYTKEDLILCGEGKMFGEGNCRLPSDNMLMMDRITSITADGGIHGKGEIVAELDIDPSLWFFDCHFKGDPVMPGCLGLDAMWQLVGFYLGWSGGPGLGRALGVGEVKFTGQILPTAKKVTYRLVMKRVIKRKLFMGVADGTVEVDGRVIYEAKDLKVGLFQDTSAF.

Residue His70 is part of the active site.

The protein belongs to the thioester dehydratase family. FabA subfamily. In terms of assembly, homodimer.

It is found in the cytoplasm. The catalysed reaction is a (3R)-hydroxyacyl-[ACP] = a (2E)-enoyl-[ACP] + H2O. It carries out the reaction (3R)-hydroxydecanoyl-[ACP] = (2E)-decenoyl-[ACP] + H2O. It catalyses the reaction (2E)-decenoyl-[ACP] = (3Z)-decenoyl-[ACP]. It functions in the pathway lipid metabolism; fatty acid biosynthesis. Necessary for the introduction of cis unsaturation into fatty acids. Catalyzes the dehydration of (3R)-3-hydroxydecanoyl-ACP to E-(2)-decenoyl-ACP and then its isomerization to Z-(3)-decenoyl-ACP. Can catalyze the dehydratase reaction for beta-hydroxyacyl-ACPs with saturated chain lengths up to 16:0, being most active on intermediate chain length. The chain is 3-hydroxydecanoyl-[acyl-carrier-protein] dehydratase from Pseudoalteromonas translucida (strain TAC 125).